The chain runs to 300 residues: MSIRSLAYMRIEATDMSAWREYGLKVLGMVEGKGSDPDALYLRMDDFPARLVIFPGEHDRLSVSGWETANAAELQEVRDNLSAAGVAFKEGTAEQLQDRRVDELITFEDPSGNTLEAFHGAALEHRRVVSPYGHKFVTGEQGLGHVVLSTTDDEASLRFYRDVLGFRLRDSMRLPPQLVGRPADGKPAWLRFFGCNPRHHSLAFLPMPTPSGIVHLMIEVENSDDVGLCLDRALRKKVKMSATLGRHVNDLMLSFYMKTPGGFDIEFGCEGRQVEDESWIARESTAVSLWGHDFSVGMQP.

VOC domains lie at 5 to 120 and 142 to 270; these read SLAY…AFHG and GLGH…FGCE. Histidine 145 is a Fe cation binding site. 4 residues coordinate substrate: histidine 200, histidine 215, aspartate 250, and tyrosine 256. Residue histidine 215 participates in Fe cation binding. Position 266 (glutamate 266) interacts with Fe cation.

Belongs to the extradiol ring-cleavage dioxygenase family. In terms of assembly, homodimer. Fe(2+) is required as a cofactor.

The catalysed reaction is 3,4-dihydroxy-9,10-secoandrosta-1,3,5(10)-triene-9,17-dione + O2 = (1E,2Z)-3-hydroxy-5,9,17-trioxo-4,5:9,10-disecoandrosta-1(10),2-dien-4-oate + H(+). It participates in steroid metabolism; cholesterol metabolism. Functionally, catalyzes the meta-cleavage of 3,4-dihydroxy-9,10-seconandrost-1,3,5(10)-triene-9,17-dione (3,4-DHSA) to produce 4,5-9,10-diseco-3-hydroxy-5,9,17-trioxoandrosta-1(10),2-diene-4-oic acid (4,9-DSHA). Also involved in biphenyl and polychlorinated biphenyls (PCBs) degradation. In Rhodococcus jostii (strain RHA1), this protein is Iron-dependent extradiol dioxygenase (hsaC).